The chain runs to 306 residues: Beta-lactamase (306 aa).

Residues 1-34 (MDRTTARPNRRAVLATGVGAALAATAAAAGPAHA) constitute a signal peptide (tat-type signal). The active-site Acyl-ester intermediate is the serine 82. 250-252 (KTG) provides a ligand contact to substrate.

Belongs to the class-A beta-lactamase family. Predicted to be exported by the Tat system. The position of the signal peptide cleavage has not been experimentally proven.

It carries out the reaction a beta-lactam + H2O = a substituted beta-amino acid. The sequence is that of Beta-lactamase (blaF) from Streptomyces fradiae (Streptomyces roseoflavus).